The sequence spans 402 residues: Pyridinium-3,5-bisthiocarboxylic acid mononucleotide nickel insertion protein (402 aa).

The protein belongs to the LarC family.

It carries out the reaction Ni(II)-pyridinium-3,5-bisthiocarboxylate mononucleotide = pyridinium-3,5-bisthiocarboxylate mononucleotide + Ni(2+). Its function is as follows. Involved in the biosynthesis of a nickel-pincer cofactor ((SCS)Ni(II) pincer complex). Binds Ni(2+), and functions in nickel delivery to pyridinium-3,5-bisthiocarboxylic acid mononucleotide (P2TMN), to form the mature cofactor. Is thus probably required for the activation of nickel-pincer cofactor-dependent enzymes. The polypeptide is Pyridinium-3,5-bisthiocarboxylic acid mononucleotide nickel insertion protein (Desulfitobacterium hafniense (strain DSM 10664 / DCB-2)).